The following is a 349-amino-acid chain: 4-hydroxy-3-methylbut-2-en-1-yl diphosphate synthase (flavodoxin) (349 aa).

Cysteine 265, cysteine 268, cysteine 300, and glutamate 307 together coordinate [4Fe-4S] cluster.

Belongs to the IspG family. [4Fe-4S] cluster serves as cofactor.

The enzyme catalyses (2E)-4-hydroxy-3-methylbut-2-enyl diphosphate + oxidized [flavodoxin] + H2O + 2 H(+) = 2-C-methyl-D-erythritol 2,4-cyclic diphosphate + reduced [flavodoxin]. Its pathway is isoprenoid biosynthesis; isopentenyl diphosphate biosynthesis via DXP pathway; isopentenyl diphosphate from 1-deoxy-D-xylulose 5-phosphate: step 5/6. Functionally, converts 2C-methyl-D-erythritol 2,4-cyclodiphosphate (ME-2,4cPP) into 1-hydroxy-2-methyl-2-(E)-butenyl 4-diphosphate. In Thermodesulfovibrio yellowstonii (strain ATCC 51303 / DSM 11347 / YP87), this protein is 4-hydroxy-3-methylbut-2-en-1-yl diphosphate synthase (flavodoxin).